Consider the following 245-residue polypeptide: 1-(5-phosphoribosyl)-5-[(5-phosphoribosylamino)methylideneamino] imidazole-4-carboxamide isomerase (245 aa).

Aspartate 7 acts as the Proton acceptor in catalysis. The Proton donor role is filled by aspartate 129.

The protein belongs to the HisA/HisF family.

The protein localises to the cytoplasm. It carries out the reaction 1-(5-phospho-beta-D-ribosyl)-5-[(5-phospho-beta-D-ribosylamino)methylideneamino]imidazole-4-carboxamide = 5-[(5-phospho-1-deoxy-D-ribulos-1-ylimino)methylamino]-1-(5-phospho-beta-D-ribosyl)imidazole-4-carboxamide. It functions in the pathway amino-acid biosynthesis; L-histidine biosynthesis; L-histidine from 5-phospho-alpha-D-ribose 1-diphosphate: step 4/9. The polypeptide is 1-(5-phosphoribosyl)-5-[(5-phosphoribosylamino)methylideneamino] imidazole-4-carboxamide isomerase (Aliivibrio fischeri (strain ATCC 700601 / ES114) (Vibrio fischeri)).